A 173-amino-acid polypeptide reads, in one-letter code: Co-chaperone protein HscB homolog (173 aa).

Residues 5–77 (CHFAQFDLQP…PRRALYLLTL (73 aa)) enclose the J domain.

This sequence belongs to the HscB family. As to quaternary structure, interacts with HscA and stimulates its ATPase activity.

In terms of biological role, co-chaperone involved in the maturation of iron-sulfur cluster-containing proteins. Seems to help targeting proteins to be folded toward HscA. In Pseudomonas paraeruginosa (strain DSM 24068 / PA7) (Pseudomonas aeruginosa (strain PA7)), this protein is Co-chaperone protein HscB homolog.